The sequence spans 503 residues: Probable dolichyl pyrophosphate Man9GlcNAc2 alpha-1,3-glucosyltransferase (503 aa).

Residues 1–46 lie on the Cytoplasmic side of the membrane; it reads MKERIKDKAWRPQFIKLNNPDTSKKIVSQKSKKPEIVDLSSPGNND. A helical transmembrane segment spans residues 47–67; the sequence is LVTISILCVLLCFQLAISLNP. At 68–151 the chain is on the lumenal side; that stretch reads HSGESQPPMY…SRGYESIAHK (84 aa). A helical transmembrane segment spans residues 152–172; the sequence is LFMRLSAIIPFYIFYLPPLIF. Over 173–181 the chain is Cytoplasmic; it reads YFTRSKKMS. The chain crosses the membrane as a helical span at residues 182–202; sequence PILYALALLYPSLLVIDNGHF. Topologically, residues 203–211 are lumenal; it reads QYNSISLGL. Residues 212 to 232 traverse the membrane as a helical segment; the sequence is FLATYMFLTKNFTIIGSILFV. The Cytoplasmic segment spans residues 233–239; it reads AALNYKQ. The helical transmembrane segment at 240 to 257 threads the bilayer; it reads MELYHALPVFVFILARSI. The Lumenal segment spans residues 258-268; the sequence is NKTQLFNSFRR. Residues 269–289 form a helical membrane-spanning segment; it reads ILTIGLFVVGTFLIIWLPFLL. Over 290–332 the chain is Cytoplasmic; the sequence is TGTAKDVIIRVFPFNRGLYEDKVASFWCAFSFILKRLPLQSVQ. Residues 333–353 form a helical membrane-spanning segment; it reads IYISTALVLAGSAPSLLVLFL. Residues 354-359 lie on the Lumenal side of the membrane; sequence RPTEKQ. A helical transmembrane segment spans residues 360 to 379; that stretch reads FRISLTATGLSFFLFSFHVH. The Cytoplasmic segment spans residues 380–382; the sequence is EKT. Residues 383-403 traverse the membrane as a helical segment; the sequence is ILLAAVPALLLISEYTSLVIW. The Lumenal portion of the chain corresponds to 404-420; sequence FLNITNISIFSLCVKDN. Residues 421 to 441 traverse the membrane as a helical segment; it reads FALSLSFFFAYFVVSYAYTAP. Topologically, residues 442-443 are cytoplasmic; sequence RK. A helical transmembrane segment spans residues 444–464; sequence ISHILTILIGFAICILELYGP. The Lumenal segment spans residues 465 to 474; that stretch reads SNQRFPHIYQ. A helical transmembrane segment spans residues 475 to 495; that stretch reads LANAFFSCVHFIYFLLYLSFA. The Cytoplasmic segment spans residues 496 to 503; that stretch reads SFEKTKKE.

It belongs to the ALG6/ALG8 glucosyltransferase family.

Its subcellular location is the endoplasmic reticulum membrane. It catalyses the reaction an alpha-D-Man-(1-&gt;2)-alpha-D-Man-(1-&gt;2)-alpha-D-Man-(1-&gt;3)-[alpha-D-Man-(1-&gt;2)-alpha-D-Man-(1-&gt;3)-[alpha-D-Man-(1-&gt;2)-alpha-D-Man-(1-&gt;6)]-alpha-D-Man-(1-&gt;6)]-beta-D-Man-(1-&gt;4)-beta-D-GlcNAc-(1-&gt;4)-alpha-D-GlcNAc-diphospho-di-trans,poly-cis-dolichol + a di-trans,poly-cis-dolichyl beta-D-glucosyl phosphate = an alpha-D-Glc-(1-&gt;3)-alpha-D-Man-(1-&gt;2)-alpha-D-Man-(1-&gt;2)-alpha-D-Man-(1-&gt;3)-[alpha-D-Man-(1-&gt;2)-alpha-D-Man-(1-&gt;3)-[alpha-D-Man-(1-&gt;2)-alpha-D-Man-(1-&gt;6)]-alpha-D-Man-(1-&gt;6)]-beta-D-Man-(1-&gt;4)-beta-D-GlcNAc-(1-&gt;4)-alpha-D-GlcNAc-diphospho-di-trans,poly-cis-dolichol + a di-trans,poly-cis-dolichyl phosphate + H(+). Its pathway is protein modification; protein glycosylation. Adds the first glucose residue to the lipid-linked oligosaccharide precursor for N-linked glycosylation. Transfers glucose from dolichyl phosphate glucose (Dol-P-Glc) onto the lipid-linked oligosaccharide Man(9)GlcNAc(2)-PP-Dol. This Caenorhabditis elegans protein is Probable dolichyl pyrophosphate Man9GlcNAc2 alpha-1,3-glucosyltransferase.